A 406-amino-acid chain; its full sequence is Homocysteine-responsive endoplasmic reticulum-resident ubiquitin-like domain member 2 protein (406 aa).

The region spanning 10–89 (VTLIIKAPNQ…HMVHLVCTSR (80 aa)) is the Ubiquitin-like domain. Residues 86-154 (CTSRTPPSSP…TLPQAQTDQA (69 aa)) are disordered. Composition is skewed to low complexity over residues 87–98 (TSRTPPSSPKSS) and 106–126 (ALASSSNSSSDHSGSTTPSSG). The segment covering 127–154 (QETLSLAVGSSSEGLRQRTLPQAQTDQA) has biased composition (polar residues). A helical transmembrane segment spans residues 302–322 (FIMVMGAMLLVYLHQAGWFPF).

It is found in the membrane. Could be involved in the unfolded protein response (UPR) pathway. The protein is Homocysteine-responsive endoplasmic reticulum-resident ubiquitin-like domain member 2 protein (HERPUD2) of Homo sapiens (Human).